Reading from the N-terminus, the 335-residue chain is MTGGFCVPVLLAAWLAAAAAEGLEQAALPAEESRVQPMTASNWTLVMEGEWMLKFYAPWCPSCQQTDSEWETFAKNGETLQISVGKVDVIQEPGLSGRFFVTTLPAFFHAKDGIFRRYRGPGIYEDLQNYILEKKWQSVEPLTGWKSPASLTMSGMAGLFSISGKIWHLHNYFTVTLGIPAWCSYVFFVIATLVFGLFMGLILVVISECFCVPLPRASSERCEQEQSTGEAQGAEQLQDAEEEKDDSNEEENKDSLVDDEEEKEDIGDEDEGEEDEEEDNLAGIMAEERSDTNERAVVKEGSVSPKEDGAHPADTQDVVEDALRQRKSQNANKGS.

Residues 1 to 20 form the signal peptide; that stretch reads MTGGFCVPVLLAAWLAAAAA. Residues 26 to 133 form the Thioredoxin domain; the sequence is AALPAEESRV…YEDLQNYILE (108 aa). Active-site nucleophile residues include Cys60 and Cys63. Cys60 and Cys63 form a disulfide bridge. A helical membrane pass occupies residues 186–206; it reads VFFVIATLVFGLFMGLILVVI. Positions 222 to 316 are disordered; that stretch reads CEQEQSTGEA…EDGAHPADTQ (95 aa). The segment covering 238-280 has biased composition (acidic residues); it reads QDAEEEKDDSNEEENKDSLVDDEEEKEDIGDEDEGEEDEEEDN. 2 positions are modified to phosphoserine: Ser247 and Ser255. Residues 286–298 are compositionally biased toward basic and acidic residues; sequence AEERSDTNERAVV.

It localises to the nucleus inner membrane. Its subcellular location is the endoplasmic reticulum membrane. The sequence is that of Thioredoxin-related transmembrane protein 4 (Tmx4) from Mus musculus (Mouse).